The primary structure comprises 1113 residues: Lon protease homolog, mitochondrial (1113 aa).

A mitochondrion-targeting transit peptide spans 1–61 (MLRGQTLPWR…RAFSSSSIRR (61 aa)). A disordered region spans residues 42–196 (SRLHRSLPTS…SGEKALQKPS (155 aa)). Basic and acidic residues-rich tracts occupy residues 64-99 (KPPP…RKAA), 124-143 (KAGA…KDGN), and 178-192 (DGGK…EKAL). The region spanning 204-456 (VMAIPIAKRP…KALVVLKKEL (253 aa)) is the Lon N-terminal domain. ATP is bound at residue 609 to 616 (GPPGVGKT). Positions 828–858 (LTDEGKAVQEESQKETESPDSKSPVDPEKST) are enriched in basic and acidic residues. The segment at 828-864 (LTDEGKAVQEESQKETESPDSKSPVDPEKSTTETPRV) is disordered. Residues 898–1084 (TFPPGVTMGL…SEVFDLLFTD (187 aa)) enclose the Lon proteolytic domain. Residues S990 and K1033 contribute to the active site.

Belongs to the peptidase S16 family. Homohexamer or homoheptamer. Organized in a ring with a central cavity.

The protein resides in the mitochondrion matrix. The enzyme catalyses Hydrolysis of proteins in presence of ATP.. Its function is as follows. ATP-dependent serine protease that mediates the selective degradation of misfolded, unassembled or oxidatively damaged polypeptides as well as certain short-lived regulatory proteins in the mitochondrial matrix. May also have a chaperone function in the assembly of inner membrane protein complexes. Participates in the regulation of mitochondrial gene expression and in the maintenance of the integrity of the mitochondrial genome. Binds to mitochondrial DNA in a site-specific manner. The chain is Lon protease homolog, mitochondrial (pim1) from Aspergillus niger (strain ATCC MYA-4892 / CBS 513.88 / FGSC A1513).